We begin with the raw amino-acid sequence, 1259 residues long: Autism susceptibility gene 2 protein (1259 aa).

Disordered stretches follow at residues 1–87 (MDGP…EEDI), 108–285 (LKPQ…QDCC), 299–470 (CPQV…PPPP), 771–1027 (PNSM…MTVG), and 1119–1146 (REPH…HERG). The segment covering 8-17 (HGLRKKRRSR) has biased composition (basic residues). Positions 28–41 (GGLGAGAAGGGGAG) are enriched in gly residues. Positions 108–118 (LKPQERVEKRQ) are enriched in basic and acidic residues. Basic residues predominate over residues 136–147 (HSKKSRLSHPHH). Residues 148–158 (YSSDRENDRNL) are compositionally biased toward basic and acidic residues. Residues 177–192 (PGQNSCRDSDSESASG) show a composition bias toward polar residues. The segment covering 276–285 (RSQEKSQDCC) has biased composition (basic and acidic residues). Residues 289–472 (IFEPVVLKDP…PTALPPPPPL (184 aa)) are important for regulation of lamellipodia formation. Pro residues-rich tracts occupy residues 331–345 (PPQP…PQGP) and 353–365 (APQP…PRPQ). Positions 386-410 (SLSQPLSAYNSSSLSLNSLSSSRSS) are enriched in low complexity. The segment covering 436 to 447 (PNHSPLHSFTPT) has biased composition (polar residues). Positions 801–810 (PSFPTPPPWL) are enriched in pro residues. Composition is skewed to basic and acidic residues over residues 813-850 (GELE…VEKR), 876-935 (IRAH…EAKQ), and 960-993 (REAE…HDLP). The span at 1125–1134 (SHHHHHHHHP) shows a compositional bias: basic residues. A phosphoserine mark is found at Ser-1198 and Ser-1233. The segment at 1217–1259 (LSAPPPLISTLGGRPVSPRRTTPLSAEIRERPPSHTLKDIEAR) is disordered. The span at 1243–1259 (EIRERPPSHTLKDIEAR) shows a compositional bias: basic and acidic residues.

The protein belongs to the AUTS2 family. In terms of assembly, component of a PRC1-like complex that contains PCGF5, RNF2, CSNK2B, RYBP and AUTS2. Within this complex, interacts directly with PCGF5 and CSNK2B. Interacts with the histone acetyltransferase EP300/p300. Interacts (via Pro-rich region) with PREX1, DOCK1 and ELMO2. Strongly expressed in brain, skeletal muscle and kidney. Also expressed in placenta, lung and leukocytes.

Its subcellular location is the nucleus. The protein resides in the cytoplasm. It is found in the cytoskeleton. The protein localises to the cell projection. It localises to the growth cone. Its function is as follows. Component of a Polycomb group (PcG) multiprotein PRC1-like complex, a complex class required to maintain the transcriptionally repressive state of many genes, including Hox genes, throughout development. PcG PRC1 complex acts via chromatin remodeling and modification of histones; it mediates monoubiquitination of histone H2A 'Lys-119', rendering chromatin heritably changed in its expressibility. The PRC1-like complex that contains PCGF5, RNF2, CSNK2B, RYBP and AUTS2 has decreased histone H2A ubiquitination activity, due to the phosphorylation of RNF2 by CSNK2B. As a consequence, the complex mediates transcriptional activation. In the cytoplasm, plays a role in axon and dendrite elongation and in neuronal migration during embryonic brain development. Promotes reorganization of the actin cytoskeleton, lamellipodia formation and neurite elongation via its interaction with RAC guanine nucleotide exchange factors, which then leads to the activation of RAC1. This is Autism susceptibility gene 2 protein (AUTS2) from Homo sapiens (Human).